The chain runs to 539 residues: Phosphoenolpyruvate carboxykinase (ATP) (539 aa).

Substrate-binding residues include R64, Y206, and K212. Residues K212, H231, and 247–255 each bind ATP; that span reads GLSGTGKTT. K212 and H231 together coordinate Mn(2+). Residue D268 coordinates Mn(2+). ATP is bound by residues E296, R332, 448 to 449, and T454; that span reads RI. R332 serves as a coordination point for substrate.

It belongs to the phosphoenolpyruvate carboxykinase (ATP) family. Monomer. The cofactor is Mn(2+).

It localises to the cytoplasm. It carries out the reaction oxaloacetate + ATP = phosphoenolpyruvate + ADP + CO2. The protein operates within carbohydrate biosynthesis; gluconeogenesis. Involved in the gluconeogenesis. Catalyzes the conversion of oxaloacetate (OAA) to phosphoenolpyruvate (PEP) through direct phosphoryl transfer between the nucleoside triphosphate and OAA. This chain is Phosphoenolpyruvate carboxykinase (ATP), found in Pectobacterium atrosepticum (strain SCRI 1043 / ATCC BAA-672) (Erwinia carotovora subsp. atroseptica).